A 467-amino-acid polypeptide reads, in one-letter code: Keratin, type 1 cytoskeletal 11 (467 aa).

Residues 1-100 (MSYSSFSIAQ…GGTDFLLGTS (100 aa)) are head. Residues 12-30 (SRVPSLSGTRSSSSYSLKS) are compositionally biased toward low complexity. Residues 12 to 32 (SRVPSLSGTRSSSSYSLKSDL) are disordered. Residues 101-137 (GKEAMQNLNDRLADYLARVRSLEDRNRELEQKIREWY) form a coil 1A region. Residues 101 to 413 (GKEAMQNLND…TLLEGDAGRS (313 aa)) enclose the IF rod domain. A linker 1 region spans residues 138-156 (EKQGAGTKRKDFSHYFKII). Positions 157 to 248 (ADLQNQINAG…SHDEDMKALR (92 aa)) are coil 1B. Positions 249–268 (SQLGGQVNVEVDAAPAEDLT) are linker 12. The interval 269-416 (KKLEIIRQRY…EGDAGRSHSS (148 aa)) is coil 2. Positions 409–430 (DAGRSHSSSHLSSTVSKDKVPV) are disordered. A tail region spans residues 417-463 (SHLSSTVSKDKVPVSSPNVITKVRTIVEEKINGQVISKKEYEGSPDQ).

This sequence belongs to the intermediate filament family. In terms of assembly, heterotetramer of two type I and two type II keratins. In terms of tissue distribution, expressed in the outermost cell layers of skin epidermis (at protein level).

The polypeptide is Keratin, type 1 cytoskeletal 11 (Protopterus aethiopicus (Marbled lungfish)).